Consider the following 486-residue polypeptide: Protein nucleotidyltransferase YdiU (486 aa).

ATP-binding residues include Gly-90, Gly-92, Arg-93, Lys-113, Asp-125, Gly-126, Arg-176, and Arg-183. Catalysis depends on Asp-252, which acts as the Proton acceptor. Residues Asn-253 and Asp-262 each contribute to the Mg(2+) site. Asp-262 is a binding site for ATP.

The protein belongs to the SELO family. Requires Mg(2+) as cofactor. Mn(2+) serves as cofactor.

It carries out the reaction L-seryl-[protein] + ATP = 3-O-(5'-adenylyl)-L-seryl-[protein] + diphosphate. The enzyme catalyses L-threonyl-[protein] + ATP = 3-O-(5'-adenylyl)-L-threonyl-[protein] + diphosphate. It catalyses the reaction L-tyrosyl-[protein] + ATP = O-(5'-adenylyl)-L-tyrosyl-[protein] + diphosphate. The catalysed reaction is L-histidyl-[protein] + UTP = N(tele)-(5'-uridylyl)-L-histidyl-[protein] + diphosphate. It carries out the reaction L-seryl-[protein] + UTP = O-(5'-uridylyl)-L-seryl-[protein] + diphosphate. The enzyme catalyses L-tyrosyl-[protein] + UTP = O-(5'-uridylyl)-L-tyrosyl-[protein] + diphosphate. In terms of biological role, nucleotidyltransferase involved in the post-translational modification of proteins. It can catalyze the addition of adenosine monophosphate (AMP) or uridine monophosphate (UMP) to a protein, resulting in modifications known as AMPylation and UMPylation. The chain is Protein nucleotidyltransferase YdiU from Pseudomonas aeruginosa (strain ATCC 15692 / DSM 22644 / CIP 104116 / JCM 14847 / LMG 12228 / 1C / PRS 101 / PAO1).